Reading from the N-terminus, the 586-residue chain is Pescadillo homolog (586 aa).

A required for 28S ribosomal RNA processing region spans residues 1-54; the sequence is MGGLEKKKYERGSATNYITRNKARKKLQLSLPDFRRLCILKGIYPHEPKHKKKV. Residues 1-257 form a sufficient for nucleolar localization region; sequence MGGLEKKKYE…PKIESQAQAE (257 aa). The residue at position 98 (Lys-98) is an N6-acetyllysine. Residues 305 to 414 are sufficient for interaction with MAP1B; the sequence is VTAQEEDRRK…LLLPVAEYFP (110 aa). The region spanning 321–414 is the BRCT domain; it reads KHKKLFEGLK…LLLPVAEYFP (94 aa). Residues 447–508 form a disordered region; that stretch reads GEDPGNLEEE…QQRLGGKKPQ (62 aa). Acidic residues predominate over residues 451 to 491; it reads GNLEEEEEDEDDEGDDSEGDGDVAVENEEEVVEAESEEEEE. Lys-515 participates in a covalent cross-link: Glycyl lysine isopeptide (Lys-Gly) (interchain with G-Cter in SUMO1); alternate. Lys-515 is covalently cross-linked (Glycyl lysine isopeptide (Lys-Gly) (interchain with G-Cter in SUMO2); alternate). Positions 537-586 are required for 28S ribosomal RNA processing; the sequence is MMKKREKYLYQKIMFGKRRKIREANKLAEKRKAHDDAVRSEKKAKRTRPV. Positions 562 to 577 are enriched in basic and acidic residues; the sequence is KLAEKRKAHDDAVRSE. Residues 562–586 form a disordered region; that stretch reads KLAEKRKAHDDAVRSEKKAKRTRPV.

This sequence belongs to the pescadillo family. As to quaternary structure, component of the PeBoW complex, composed of BOP1, PES1 and WDR12. The complex is held together by BOP1, which interacts with PES1 via its N-terminal domain and with WDR12 via a high-affinity interaction between the seven-bladed beta-propeller domains of the 2 proteins. The PeBoW complex associates with the 66S pre-ribosome. The PeBoW complex also associates with DDX27, PES1 interacts directly with DDX27. Interacts with IRS1 and UBTF. May interact with MAP1B. In terms of processing, sumoylated.

The protein resides in the nucleus. Its subcellular location is the nucleolus. It is found in the nucleoplasm. The protein localises to the chromosome. Component of the PeBoW complex, which is required for maturation of 28S and 5.8S ribosomal RNAs and formation of the 60S ribosome. This Rattus norvegicus (Rat) protein is Pescadillo homolog (Pes1).